The chain runs to 207 residues: Thiamine-phosphate synthase (207 aa).

4-amino-2-methyl-5-(diphosphooxymethyl)pyrimidine-binding positions include 35–39 (QYRDK) and Asn-67. The Mg(2+) site is built by Asp-68 and Asp-86. 4-amino-2-methyl-5-(diphosphooxymethyl)pyrimidine is bound at residue Thr-105. Residue 132 to 134 (SVT) participates in 2-[(2R,5Z)-2-carboxy-4-methylthiazol-5(2H)-ylidene]ethyl phosphate binding. Lys-135 is a binding site for 4-amino-2-methyl-5-(diphosphooxymethyl)pyrimidine. Gly-162 is a binding site for 2-[(2R,5Z)-2-carboxy-4-methylthiazol-5(2H)-ylidene]ethyl phosphate.

The protein belongs to the thiamine-phosphate synthase family. The cofactor is Mg(2+).

It carries out the reaction 2-[(2R,5Z)-2-carboxy-4-methylthiazol-5(2H)-ylidene]ethyl phosphate + 4-amino-2-methyl-5-(diphosphooxymethyl)pyrimidine + 2 H(+) = thiamine phosphate + CO2 + diphosphate. The catalysed reaction is 2-(2-carboxy-4-methylthiazol-5-yl)ethyl phosphate + 4-amino-2-methyl-5-(diphosphooxymethyl)pyrimidine + 2 H(+) = thiamine phosphate + CO2 + diphosphate. It catalyses the reaction 4-methyl-5-(2-phosphooxyethyl)-thiazole + 4-amino-2-methyl-5-(diphosphooxymethyl)pyrimidine + H(+) = thiamine phosphate + diphosphate. Its pathway is cofactor biosynthesis; thiamine diphosphate biosynthesis; thiamine phosphate from 4-amino-2-methyl-5-diphosphomethylpyrimidine and 4-methyl-5-(2-phosphoethyl)-thiazole: step 1/1. Condenses 4-methyl-5-(beta-hydroxyethyl)thiazole monophosphate (THZ-P) and 2-methyl-4-amino-5-hydroxymethyl pyrimidine pyrophosphate (HMP-PP) to form thiamine monophosphate (TMP). This is Thiamine-phosphate synthase from Pseudomonas putida (strain W619).